The sequence spans 868 residues: Ionotropic receptor 93a (868 aa).

A signal peptide spans 1–28 (MNPGEMRPSACLLLLAGLQLSILVPTEA). Residues 29–565 (NDFSSFLSAN…ITRKPDEVSR (537 aa)) are Extracellular-facing. Asparagine 38, asparagine 205, asparagine 294, asparagine 305, asparagine 432, asparagine 475, asparagine 499, and asparagine 543 each carry an N-linked (GlcNAc...) asparagine glycan. Residues 566 to 586 (IYLFTAPFTVETWFCLMGIIL) form a helical membrane-spanning segment. Residues 587 to 642 (LTAPTLYAINRLAPLKEMRIVGLSTVKSCFWYIFGALLQQGGMYLPTADSGRLVVG) are Cytoplasmic-facing. The chain crosses the membrane as a helical span at residues 643–663 (FWWIVVIVLVTTYCGNLVAFL). The Extracellular portion of the chain corresponds to 664–832 (TFPKFQPGVD…HKVNMDDMQG (169 aa)). Asparagine 691 carries N-linked (GlcNAc...) asparagine glycosylation. Residues 833–853 (CFLVLLLGFTLALLIVCGEFW) traverse the membrane as a helical segment. The Cytoplasmic segment spans residues 854 to 868 (YRRFRASRKRRQFTN).

This sequence belongs to the glutamate-gated ion channel (TC 1.A.10.1) family. In terms of tissue distribution, in the antenna, detected in sacculus neurons which innervate the first and second chambers (at protein level). Expressed in multiple cells of the larval dorsal organ ganglion, including the dorsal organ cool cells where it is predominately localized to the dendritic bulbs (at protein level).

Its subcellular location is the cell membrane. Its function is as follows. Integral part of various neural sensory systems in the antenna that provide the neural basis for the response to environmental changes in temperature (thermosensation) and humidity (hygrosensation). Together with Ir21a and Ir25a, mediates the response of the larval dorsal organ cool cells, a trio of cool-responsive neurons, to cooling and is required for cool avoidance behavior. Together with Ir25a and Ir40a, mediates the response of the hydrosensory sacculus neurons to changes in relative humidity, and is required for dry detection and humidiy preference behavior. The sequence is that of Ionotropic receptor 93a from Drosophila melanogaster (Fruit fly).